We begin with the raw amino-acid sequence, 534 residues long: Cytochrome P450 monooxygenase vrtK (534 aa).

Position 448 (C448) interacts with heme.

The protein belongs to the cytochrome P450 family. Heme is required as a cofactor.

Its pathway is secondary metabolite biosynthesis; terpenoid biosynthesis. Its function is as follows. Cytochrome P450 monooxygenase; part of the gene cluster that mediates the biosynthesis of viridicatumtoxin, a tetracycline-like fungal meroterpenoid with a unique, fused spirobicyclic ring system. The first step of the pathway is the production of the malonamoyl-CoA starter unit for the polyketide synthase vrtA. The aldolase vrtJ may be involved in the synthesis of the malonamate substrate for malonamoyl-CoA synthetase vrtB. The polyketide synthase vrtA then may utilize the malonamoyl-CoA starter unit, followed by sequential condensation of eight malonyl-CoA units to form the polyketide backbone. The cyclization of the last ring could be mediated by the lactamase-like protein vrtG. The proposed post-PKS tailoring steps are a hydroxylation at C5 catalyzed the cytochrome P450 monooxygenase vrtE, a hydroxylation at C12a catalyzed by VrtH and/or VrtI, and an O-methylation by the O-methyltransferase vrtF. VrtC is then proposed to catalyze the transfer of a geranyl group synthesized by vrtD to the aromatic C ring of the tetracyclic polyketide intermediate of viridicatumtoxin to yield previridicatumtoxin. Finally, the cytochrome P450 monooxygenase vrtK catalyzes the spirocyclization of the geranyl moiety of previridicatumtoxin to afford viridicatumtoxin. This Penicillium aethiopicum protein is Cytochrome P450 monooxygenase vrtK.